We begin with the raw amino-acid sequence, 332 residues long: GDP-mannose transporter 2 (332 aa).

Residues 1 to 12 (MSSLKVSQQDKK) are Cytoplasmic-facing. A helical transmembrane segment spans residues 13-33 (WVNSGSVAILAYCASSILMTI). Residues 34-47 (TNKVVMSDRTFNMN) lie on the Lumenal side of the membrane. Residues 48–68 (FLLLFIQSLVCVITLLVLKVL) traverse the membrane as a helical segment. Over 69 to 84 (GSVNFRSFNKTDARNW) the chain is Cytoplasmic. Residues 85-105 (FPISICLVLMIFTSSKSLQYL) traverse the membrane as a helical segment. Residues 106–108 (SVP) are Lumenal-facing. Residues 109–129 (VYTIFKNLTIIVIAYGEVLFF) form a helical membrane-spanning segment. Residues 130–131 (GS) are Cytoplasmic-facing. The chain crosses the membrane as a helical span at residues 132 to 152 (SVGNMELGSFALMIVSSLIAA). Residues 153–174 (HGDYLHSVERLKKMLGPNVSFS) lie on the Lumenal side of the membrane. N-linked (GlcNAc...) asparagine glycosylation occurs at N170. Residues 175–195 (FIVNIGYFWIAANCFASALFV) traverse the membrane as a helical segment. The Cytoplasmic portion of the chain corresponds to 196-211 (LLMRKRIQVTNFKDFD). Residues 212–232 (TMFYNNVLSLPLLLLGSYLFE) form a helical membrane-spanning segment. Topologically, residues 233-248 (DWSQENLLPHVDIDNL) are lumenal. An N-linked (GlcNAc...) asparagine glycan is attached at N247. The helical transmembrane segment at 249–269 (STMIISGLASVAISYCSGWCV) threads the bilayer. The Cytoplasmic portion of the chain corresponds to 270 to 274 (RVTSS). Residues 275 to 295 (TTYSMVGALNKLPIALTGFLF) traverse the membrane as a helical segment. At 296–300 (NDAAR) the chain is on the lumenal side. Residues 301–321 (NLSSAASILLGFASGIIYAVA) traverse the membrane as a helical segment. At 322–332 (KQKKLQNSEKI) the chain is on the cytoplasmic side.

It belongs to the TPT transporter family. SLC35D subfamily. As to quaternary structure, homooligomer.

It is found in the golgi apparatus membrane. The protein resides in the cytoplasmic vesicle membrane. Its subcellular location is the endoplasmic reticulum membrane. Involved in the import of GDP-mannose from the cytoplasm into the Golgi lumen. The chain is GDP-mannose transporter 2 (VRG4-2) from Vanderwaltozyma polyspora (strain ATCC 22028 / DSM 70294 / BCRC 21397 / CBS 2163 / NBRC 10782 / NRRL Y-8283 / UCD 57-17) (Kluyveromyces polysporus).